The primary structure comprises 198 residues: Recombination protein RecR (198 aa).

Residues 57–72 form a C4-type zinc finger; it reads CSICGNLTESDPCAIC. Positions 80–175 constitute a Toprim domain; it reads TTILVVEESK…KVTRLARGLA (96 aa).

The protein belongs to the RecR family.

Its function is as follows. May play a role in DNA repair. It seems to be involved in an RecBC-independent recombinational process of DNA repair. It may act with RecF and RecO. The polypeptide is Recombination protein RecR (Lactococcus lactis subsp. cremoris (strain MG1363)).